Here is a 204-residue protein sequence, read N- to C-terminus: Transcriptional regulator GfcR 1 (204 aa).

Belongs to the purine/pyrimidine phosphoribosyltransferase family. GfcR subfamily.

The chain is Transcriptional regulator GfcR 1 from Methanosarcina barkeri (strain Fusaro / DSM 804).